Reading from the N-terminus, the 431-residue chain is Protein PIN-LIKES 6 (431 aa).

At 1–29 the chain is on the lumenal side; that stretch reads MIARILAALADSMEMPVAAGGGSVLGTIK. Residues 30–50 form a helical membrane-spanning segment; it reads IAVMPIAKVFTMCFLGLLMAS. Over 51–66 the chain is Cytoplasmic; it reads KYVNILPPSGRKLLNG. A helical transmembrane segment spans residues 67–87; sequence LVFSLLLPCLIFSQLGQAVTL. Residues 88–93 are Lumenal-facing; it reads QKMLQW. A helical membrane pass occupies residues 94–114; that stretch reads WFIPVNVVLGTISGSIIGFIV. The Cytoplasmic segment spans residues 115-128; that stretch reads ASIVRPPYPYFKFT. A helical membrane pass occupies residues 129-149; it reads IIQIGVGNIGNVPLVLLAALC. Topologically, residues 150–169 are lumenal; it reads RDTSNPFGDSEKCSIDGTAY. Residues 170–190 traverse the membrane as a helical segment; that stretch reads ISFGQWVGAIILYTYVYQMFA. Topologically, residues 191–268 are cytoplasmic; the sequence is PPPEGFDAEE…FLYEKLKLKQ (78 aa). The helical transmembrane segment at 269 to 289 threads the bilayer; sequence IVQPAIVASILAMILGAIPFT. At 290 to 306 the chain is on the lumenal side; it reads KKLIFTNGAPLFFFTDS. A helical membrane pass occupies residues 307–327; that stretch reads CMILGDAMIPCILLALGGNLI. Residues 328 to 340 lie on the Cytoplasmic side of the membrane; the sequence is NGPGSSKLGFKTT. Residues 341–361 traverse the membrane as a helical segment; the sequence is AAIIIGRLVLVPPVGLGIVTV. Topologically, residues 362–376 are lumenal; that stretch reads ADKLGFLPADDKMFR. A helical transmembrane segment spans residues 377–397; that stretch reads FVLLLQHTMPTSVLSGAVANL. Residues 398-406 lie on the Cytoplasmic side of the membrane; that stretch reads RGCGRESAA. A helical membrane pass occupies residues 407-427; that stretch reads VLFWVHIFAIFSMAGWMVLYI. Residues 428-431 are Lumenal-facing; it reads NILF.

The protein belongs to the auxin efflux carrier (TC 2.A.69.2) family. Expressed in seedlings, rosette and cauline leaves, stems and flowers.

It is found in the endoplasmic reticulum membrane. Its function is as follows. Involved in cellular auxin homeostasis by regulating auxin metabolism. Regulates intracellular auxin accumulation at the endoplasmic reticulum and thus auxin availability for nuclear auxin signaling. In Arabidopsis thaliana (Mouse-ear cress), this protein is Protein PIN-LIKES 6.